A 172-amino-acid polypeptide reads, in one-letter code: Large ribosomal subunit protein uL5 (172 aa).

This sequence belongs to the universal ribosomal protein uL5 family. In terms of assembly, component of the large ribosomal subunit.

It is found in the nucleus. The protein localises to the cytoplasm. Functionally, component of the ribosome, a large ribonucleoprotein complex responsible for the synthesis of proteins in the cell. The small ribosomal subunit (SSU) binds messenger RNAs (mRNAs) and translates the encoded message by selecting cognate aminoacyl-transfer RNA (tRNA) molecules. The large subunit (LSU) contains the ribosomal catalytic site termed the peptidyl transferase center (PTC), which catalyzes the formation of peptide bonds, thereby polymerizing the amino acids delivered by tRNAs into a polypeptide chain. The nascent polypeptides leave the ribosome through a tunnel in the LSU and interact with protein factors that function in enzymatic processing, targeting, and the membrane insertion of nascent chains at the exit of the ribosomal tunnel. In Tetrahymena thermophila, this protein is Large ribosomal subunit protein uL5 (RPL11).